Here is an 806-residue protein sequence, read N- to C-terminus: Lon protease (806 aa).

The Lon N-terminal domain occupies 13–206; that stretch reads LPMMPIRDVV…RVAEMLDIEI (194 aa). 356-363 contributes to the ATP binding site; sequence GPPGVGKT. The 182-residue stretch at 599–780 folds into the Lon proteolytic domain; sequence KNEIGAATGL…DEVLKIALER (182 aa). Residues serine 686 and lysine 729 contribute to the active site.

The protein belongs to the peptidase S16 family. Homohexamer. Organized in a ring with a central cavity.

It localises to the cytoplasm. It carries out the reaction Hydrolysis of proteins in presence of ATP.. In terms of biological role, ATP-dependent serine protease that mediates the selective degradation of mutant and abnormal proteins as well as certain short-lived regulatory proteins. Required for cellular homeostasis and for survival from DNA damage and developmental changes induced by stress. Degrades polypeptides processively to yield small peptide fragments that are 5 to 10 amino acids long. Binds to DNA in a double-stranded, site-specific manner. This chain is Lon protease, found in Solibacter usitatus (strain Ellin6076).